The chain runs to 181 residues: Endoglucanase (181 aa).

Cys4 and Cys16 are disulfide-bonded. Residue Asp24 is the Nucleophile of the active site. Cystine bridges form between Cys30–Cys69, Cys32–Cys176, Cys65–Cys178, Cys72–Cys157, and Cys103–Cys113. The active-site Proton donor is the Asp132.

In terms of tissue distribution, digestive gland.

The catalysed reaction is Endohydrolysis of (1-&gt;4)-beta-D-glucosidic linkages in cellulose, lichenin and cereal beta-D-glucans.. In terms of biological role, active towards the soluble carboxymethylcellulose (CMC). Possesses expansin activity too. This Mytilus edulis (Blue mussel) protein is Endoglucanase.